A 549-amino-acid chain; its full sequence is Glucose-6-phosphate isomerase (549 aa).

The Proton donor role is filled by E355. Active-site residues include H386 and K514.

This sequence belongs to the GPI family.

It localises to the cytoplasm. The catalysed reaction is alpha-D-glucose 6-phosphate = beta-D-fructose 6-phosphate. The protein operates within carbohydrate biosynthesis; gluconeogenesis. It participates in carbohydrate degradation; glycolysis; D-glyceraldehyde 3-phosphate and glycerone phosphate from D-glucose: step 2/4. In terms of biological role, catalyzes the reversible isomerization of glucose-6-phosphate to fructose-6-phosphate. This Buchnera aphidicola subsp. Acyrthosiphon pisum (strain APS) (Acyrthosiphon pisum symbiotic bacterium) protein is Glucose-6-phosphate isomerase.